We begin with the raw amino-acid sequence, 471 residues long: N(6)-adenine-specific methyltransferase METTL4 (471 aa).

The protein belongs to the MT-A70-like family.

The protein resides in the nucleus. It carries out the reaction a 2'-O-methyladenosine in U2 snRNA + S-adenosyl-L-methionine = an N(6)-methyl-2'-O-methyladenosine in U2 snRNA + S-adenosyl-L-homocysteine + H(+). It catalyses the reaction a 2'-deoxyadenosine in DNA + S-adenosyl-L-methionine = an N(6)-methyl-2'-deoxyadenosine in DNA + S-adenosyl-L-homocysteine + H(+). In terms of biological role, n(6)-adenine-specific methyltransferase that can methylate both RNAs and DNA. Acts as a N(6)-adenine-specific RNA methyltransferase by catalyzing formation of N6,2'-O-dimethyladenosine (m6A(m)) on internal positions of U2 small nuclear RNA (snRNA): methylates the 6th position of adenine residues with a pre-deposited 2'-O-methylation. Internal m6A(m) methylation of snRNAs regulates RNA splicing. Also able to act as a N(6)-adenine-specific DNA methyltransferase by mediating methylation of DNA on the 6th position of adenine (N(6)-methyladenosine). The existence of N(6)-methyladenosine (m6A) on DNA is however unclear in mammals, and additional evidences are required to confirm the role of the N(6)-adenine-specific DNA methyltransferase activity of METTL4 in vivo. Acts as a regulator of mitochondrial transcript levels and mitochondrial DNA (mtDNA) copy number by mediating mtDNA N(6)-methylation: m6A on mtDNA reduces transcription by repressing TFAM DNA-binding and bending. N(6)-methyladenosine deposition by METTL4 regulates Polycomb silencing by triggering ubiquitination and degradation of sensor proteins ASXL1 and MPND, leading to inactivation of the PR-DUB complex and subsequent preservation of Polycomb silencing. The chain is N(6)-adenine-specific methyltransferase METTL4 from Mus musculus (Mouse).